We begin with the raw amino-acid sequence, 872 residues long: Sine oculis-binding protein homolog (872 aa).

Over residues 1–14 (MAEMEKEGRPPENK) the composition is skewed to basic and acidic residues. The tract at residues 1–26 (MAEMEKEGRPPENKRSRKPAHPVKRE) is disordered. 2 consecutive FCS-type zinc fingers follow at residues 142-180 (DDVS…KCFA) and 216-256 (FKNN…KCLN). 3 disordered regions span residues 308 to 354 (RRKA…KSMP), 411 to 484 (FIRG…PGAP), and 550 to 619 (KPPN…GRSE). Residues 319–344 (GQSQGPGPSASTTVSPSDTANCSVTK) are compositionally biased toward polar residues. Positions 417–433 (HHASNPNSPLSNPMLPG) are enriched in low complexity. The span at 460-484 (IHPPSTPTMPGNPPGLLPPPPPGAP) shows a compositional bias: pro residues. Positions 620 to 624 (VVDLT) match the SUMO interaction motif 1 (SIM); mediates the binding to polysumoylated substrates motif. Residue serine 629 is modified to Phosphoserine. Positions 651 to 655 (VIDLT) match the SUMO interaction motif 2 (SIM); mediates the binding to polysumoylated substrates motif. A Glycyl lysine isopeptide (Lys-Gly) (interchain with G-Cter in SUMO2) cross-link involves residue lysine 675. Residue serine 697 is modified to Phosphoserine. The tract at residues 728-770 (AAEGAKGAEPPPEQPPPPPPPPPAPPKKLLSPEEPAVSELESV) is disordered. Positions 736–753 (EPPPEQPPPPPPPPPAPP) are enriched in pro residues.

Belongs to the SOBP family. As to quaternary structure, interacts (via SIM domains) with SUMO1 and SUMO2.

In terms of biological role, implicated in development of the cochlea. The polypeptide is Sine oculis-binding protein homolog (Bos taurus (Bovine)).